The following is a 162-amino-acid chain: Nucleotide-binding protein CMM_2802 (162 aa).

Belongs to the YajQ family.

Functionally, nucleotide-binding protein. This Clavibacter michiganensis subsp. michiganensis (strain NCPPB 382) protein is Nucleotide-binding protein CMM_2802.